Here is a 300-residue protein sequence, read N- to C-terminus: Cation-efflux pump FieF (300 aa).

The next 4 helical transmembrane spans lie at 12–32 (AALS…FAWW), 40–60 (LAAL…LFVV), 82–102 (AALA…LTGF), and 114–134 (PGLG…LVTF). The Zn(2+) site is built by Asp45 and Asp49. Positions 153 and 157 each coordinate Zn(2+). Residues 164-184 (ILIALALSWYGFHRADALFAL) form a helical membrane-spanning segment.

Belongs to the cation diffusion facilitator (CDF) transporter (TC 2.A.4) family. FieF subfamily. In terms of assembly, homodimer.

Its subcellular location is the cell inner membrane. The catalysed reaction is Zn(2+)(in) + H(+)(out) = Zn(2+)(out) + H(+)(in). The enzyme catalyses Cd(2+)(in) + H(+)(out) = Cd(2+)(out) + H(+)(in). It catalyses the reaction Fe(2+)(in) + H(+)(out) = Fe(2+)(out) + H(+)(in). Divalent metal cation transporter which exports Zn(2+), Cd(2+) and possibly Fe(2+). May be involved in zinc and iron detoxification by efflux. The sequence is that of Cation-efflux pump FieF from Yersinia enterocolitica serotype O:8 / biotype 1B (strain NCTC 13174 / 8081).